The chain runs to 294 residues: 4-hydroxy-tetrahydrodipicolinate synthase (294 aa).

Threonine 45 lines the pyruvate pocket. The Proton donor/acceptor role is filled by tyrosine 133. Lysine 161 serves as the catalytic Schiff-base intermediate with substrate. Isoleucine 203 contacts pyruvate.

Belongs to the DapA family. Homotetramer; dimer of dimers.

The protein resides in the cytoplasm. It carries out the reaction L-aspartate 4-semialdehyde + pyruvate = (2S,4S)-4-hydroxy-2,3,4,5-tetrahydrodipicolinate + H2O + H(+). It functions in the pathway amino-acid biosynthesis; L-lysine biosynthesis via DAP pathway; (S)-tetrahydrodipicolinate from L-aspartate: step 3/4. Catalyzes the condensation of (S)-aspartate-beta-semialdehyde [(S)-ASA] and pyruvate to 4-hydroxy-tetrahydrodipicolinate (HTPA). In Buchnera aphidicola subsp. Schizaphis graminum (strain Sg), this protein is 4-hydroxy-tetrahydrodipicolinate synthase.